Consider the following 525-residue polypeptide: Glutathione hydrolase-like YwrD proenzyme (525 aa).

The active-site Nucleophile is the Thr-339.

It belongs to the gamma-glutamyltransferase family. In terms of assembly, this enzyme consists of two polypeptide chains, which are synthesized from a single polypeptide. Post-translationally, cleaved by autocatalysis into a large and a small subunit.

The catalysed reaction is an N-terminal (5-L-glutamyl)-[peptide] + an alpha-amino acid = 5-L-glutamyl amino acid + an N-terminal L-alpha-aminoacyl-[peptide]. It carries out the reaction glutathione + H2O = L-cysteinylglycine + L-glutamate. The enzyme catalyses an S-substituted glutathione + H2O = an S-substituted L-cysteinylglycine + L-glutamate. In terms of biological role, overexpressed protein with an N-terminal His tag has been reported not to hydrolyze glutathione; it is not clear if the construct is processed to 2 subunits. This chain is Glutathione hydrolase-like YwrD proenzyme (ywrD), found in Bacillus subtilis (strain 168).